Consider the following 567-residue polypeptide: R-linalool synthase QH1, chloroplastic (567 aa).

The N-terminal 24 residues, 1–24, are a transit peptide targeting the chloroplast; that stretch reads GNAYMRIYSTKTTRITANATVNAA. Residues arginine 282, aspartate 319, aspartate 323, arginine 460, and aspartate 463 each contribute to the (2E)-geranyl diphosphate site. Mg(2+) contacts are provided by aspartate 319 and aspartate 323. The DDXXD motif signature appears at 319-323; that stretch reads DDVYD. Mg(2+) contacts are provided by aspartate 463, threonine 467, and glutamate 471.

Belongs to the terpene synthase family. Tpsb subfamily. Requires Mg(2+) as cofactor. In terms of tissue distribution, highly expressed in leaves and lower levels in inflorescences. Not detected in stems, stem epidermis, stem stele or roots.

It localises to the plastid. The protein localises to the chloroplast. The enzyme catalyses (2E)-geranyl diphosphate + H2O = (R)-linalool + diphosphate. It functions in the pathway secondary metabolite biosynthesis; terpenoid biosynthesis. Its function is as follows. Monoterpene synthase that catalyzes the formation of (3R)-linalool from geranyl diphosphate, but not from isopentenyl diphosphate, dimethylallyl diphosphate, chrysanthemyl diphosphate, farnesyl diphosphate, (+)-copalyl diphosphate or geranylgeranyl diphosphate. The polypeptide is R-linalool synthase QH1, chloroplastic (QH1) (Artemisia annua (Sweet wormwood)).